The sequence spans 396 residues: GTPase Obg (396 aa).

The Obg domain maps to 1-159 (MKFVDEATIY…RNIRLELKVL (159 aa)). An OBG-type G domain is found at 160-333 (ADVGLLGLPN…LCQDIMTWIE (174 aa)). Residues 166–173 (GLPNAGKS), 191–195 (FTTLV), 213–216 (DIPG), 283–286 (NKTD), and 314–316 (SAL) each bind GTP. Residues Ser173 and Thr193 each coordinate Mg(2+). Disordered regions lie at residues 337–356 (EEER…REQM) and 373–396 (LARK…FYAP). Residues 347 to 356 (EADRLNREQM) are compositionally biased toward basic and acidic residues. The segment covering 381-396 (SDDDDDDEDVEVFYAP) has biased composition (acidic residues).

This sequence belongs to the TRAFAC class OBG-HflX-like GTPase superfamily. OBG GTPase family. In terms of assembly, monomer. The cofactor is Mg(2+).

The protein resides in the cytoplasm. Its function is as follows. An essential GTPase which binds GTP, GDP and possibly (p)ppGpp with moderate affinity, with high nucleotide exchange rates and a fairly low GTP hydrolysis rate. Plays a role in control of the cell cycle, stress response, ribosome biogenesis and in those bacteria that undergo differentiation, in morphogenesis control. The chain is GTPase Obg from Hahella chejuensis (strain KCTC 2396).